Here is a 418-residue protein sequence, read N- to C-terminus: UDP-N-acetylglucosamine 1-carboxyvinyltransferase (418 aa).

22-23 (KN) is a phosphoenolpyruvate binding site. Arg92 contacts UDP-N-acetyl-alpha-D-glucosamine. The active-site Proton donor is Cys116. Position 116 is a 2-(S-cysteinyl)pyruvic acid O-phosphothioketal (Cys116). Residues Asp305 and Ile327 each coordinate UDP-N-acetyl-alpha-D-glucosamine.

Belongs to the EPSP synthase family. MurA subfamily.

The protein localises to the cytoplasm. It carries out the reaction phosphoenolpyruvate + UDP-N-acetyl-alpha-D-glucosamine = UDP-N-acetyl-3-O-(1-carboxyvinyl)-alpha-D-glucosamine + phosphate. Its pathway is cell wall biogenesis; peptidoglycan biosynthesis. Functionally, cell wall formation. Adds enolpyruvyl to UDP-N-acetylglucosamine. This is UDP-N-acetylglucosamine 1-carboxyvinyltransferase from Gluconobacter oxydans (strain 621H) (Gluconobacter suboxydans).